A 621-amino-acid chain; its full sequence is 1-deoxy-D-xylulose-5-phosphate synthase (621 aa).

Thiamine diphosphate is bound by residues His-80 and Gly-121–Ser-123. Asp-152 serves as a coordination point for Mg(2+). Thiamine diphosphate is bound by residues Gly-153–Ala-154, Asn-181, Tyr-288, and Glu-370. Position 181 (Asn-181) interacts with Mg(2+).

The protein belongs to the transketolase family. DXPS subfamily. In terms of assembly, homodimer. Requires Mg(2+) as cofactor. The cofactor is thiamine diphosphate.

The catalysed reaction is D-glyceraldehyde 3-phosphate + pyruvate + H(+) = 1-deoxy-D-xylulose 5-phosphate + CO2. The protein operates within metabolic intermediate biosynthesis; 1-deoxy-D-xylulose 5-phosphate biosynthesis; 1-deoxy-D-xylulose 5-phosphate from D-glyceraldehyde 3-phosphate and pyruvate: step 1/1. Its function is as follows. Catalyzes the acyloin condensation reaction between C atoms 2 and 3 of pyruvate and glyceraldehyde 3-phosphate to yield 1-deoxy-D-xylulose-5-phosphate (DXP). The sequence is that of 1-deoxy-D-xylulose-5-phosphate synthase from Vibrio parahaemolyticus serotype O3:K6 (strain RIMD 2210633).